A 441-amino-acid chain; its full sequence is Hexane cyclase gkaB (441 aa).

A signal peptide spans 1–25 (MTKFLAGAAIVLAVAFGSFFSQSST). Asparagine 77, asparagine 153, asparagine 184, and asparagine 308 each carry an N-linked (GlcNAc...) asparagine glycan.

The protein belongs to the Diels-Alderase family.

The protein operates within mycotoxin biosynthesis. In terms of biological role, hexane cyclase; part of the gene cluster that mediates the biosynthesis of GKK1032, fungal natural products containing a macrocyclic para-cyclophane connected to a decahydrofluorene ring system that show potent antitumor activities. Within the pathway, gkaB functions synergistically with gkaX and gkaZ to form the cyclophane. The pathway begins with the PKS-NRPS gkaA which, with the help of the trans-enoyl reductase gkaC, synthesizes the polyketide-tyrosyl acyl thioester product which can be reductively off-loaded by the terminal reductase (R) domain in gkaA. The alpha/beta hydrolase gkaG is then required to catalyze the subsequent Knoevenagel condensation that affords the 3-pyrrolin-2-one ring, whereas the three proteins gkaB, gkaX and gkaZ then function synergistically to form the cyclophane. The protein is Hexane cyclase gkaB of Penicillium citrinum.